The chain runs to 226 residues: MNSLEPAALAQAIDHTLLAADASREQIATLCAEAREHGFYSVCVNSSQVPFAARQLAGSAVKVCAVVGFPLGAGLSASKASEAALTIAAGAQEIDMVLNIGWLKDGLFDEVRDDIAAVLQACGKVPLKVILETCLLDEAQKVRACEICRELGVAFVKTSTGFSRSGATLEDVALMRRVVGPDIGVKASGGVRDVATARAMIEAGATRLGTSSGIAIVTGAGTGAGY.

Asp-95 acts as the Proton donor/acceptor in catalysis. The active-site Schiff-base intermediate with acetaldehyde is the Lys-157. The Proton donor/acceptor role is filled by Lys-186.

The protein belongs to the DeoC/FbaB aldolase family. DeoC type 1 subfamily.

It is found in the cytoplasm. It carries out the reaction 2-deoxy-D-ribose 5-phosphate = D-glyceraldehyde 3-phosphate + acetaldehyde. Its pathway is carbohydrate degradation; 2-deoxy-D-ribose 1-phosphate degradation; D-glyceraldehyde 3-phosphate and acetaldehyde from 2-deoxy-alpha-D-ribose 1-phosphate: step 2/2. With respect to regulation, partially inhibited by acetaldehyde. After incubation for 2, 4 and 6 hours in 300 mM acetaldehyde at 25 degrees Celsius, retains approximately 61.32%, 42.33% and 34.73% of the initial 2-deoxy-D-ribose-5-phosphate (DR5P) cleavage activity, respectively. In terms of biological role, catalyzes a reversible aldol reaction between acetaldehyde and D-glyceraldehyde 3-phosphate to generate 2-deoxy-D-ribose 5-phosphate. Its function is as follows. In vitro, DERA can catalyze the aldol condensation of chloroacetaldehyde (CHAD) and acetaldehyde (ACD), yielding (S)-4-chloro-3-hydroxybutanal ((S)-CHB), which can combine with another aldehyde to form (3R,5S)-6-chloro-2,4,6-trideoxyhexapyranose (CTeHP), a key intermediate for statin drugs. The protein is Deoxyribose-phosphate aldolase of Pseudomonas syringae pv. syringae (strain B728a).